Here is a 319-residue protein sequence, read N- to C-terminus: Acetyl esterase (319 aa).

The short motif at 91 to 93 (HGG) is the Involved in the stabilization of the negatively charged intermediate by the formation of the oxyanion hole element. Active-site residues include Ser-165, Asp-262, and His-292.

The protein belongs to the 'GDXG' lipolytic enzyme family. Homodimer. Interacts with MalT and MelA.

It is found in the cytoplasm. Functionally, displays esterase activity towards short chain fatty esters (acyl chain length of up to 8 carbons). Able to hydrolyze triacetylglycerol (triacetin) and tributyrylglycerol (tributyrin), but not trioleylglycerol (triolein) or cholesterol oleate. Negatively regulates MalT activity by antagonizing maltotriose binding. Inhibits MelA galactosidase activity. The protein is Acetyl esterase of Escherichia coli O9:H4 (strain HS).